The chain runs to 412 residues: Imidazolonepropionase (412 aa).

Positions 73 and 75 each coordinate Fe(3+). Zn(2+) is bound by residues H73 and H75. The 4-imidazolone-5-propanoate site is built by R82, Y145, and H178. Y145 is a binding site for N-formimidoyl-L-glutamate. H247 is a binding site for Fe(3+). Zn(2+) is bound at residue H247. Q250 contacts 4-imidazolone-5-propanoate. A Fe(3+)-binding site is contributed by D322. D322 is a Zn(2+) binding site. Residues N324 and G326 each coordinate N-formimidoyl-L-glutamate. S327 contributes to the 4-imidazolone-5-propanoate binding site.

It belongs to the metallo-dependent hydrolases superfamily. HutI family. Requires Zn(2+) as cofactor. The cofactor is Fe(3+).

It localises to the cytoplasm. The catalysed reaction is 4-imidazolone-5-propanoate + H2O = N-formimidoyl-L-glutamate. The protein operates within amino-acid degradation; L-histidine degradation into L-glutamate; N-formimidoyl-L-glutamate from L-histidine: step 3/3. Functionally, catalyzes the hydrolytic cleavage of the carbon-nitrogen bond in imidazolone-5-propanoate to yield N-formimidoyl-L-glutamate. It is the third step in the universal histidine degradation pathway. The protein is Imidazolonepropionase of Shewanella amazonensis (strain ATCC BAA-1098 / SB2B).